A 69-amino-acid chain; its full sequence is Cold shock-like protein CspE (69 aa).

The CSD domain occupies 6–66 (GNVKWFNESK…GAKGPSAANV (61 aa)).

It localises to the cytoplasm. In Buchnera aphidicola subsp. Acyrthosiphon pisum (strain APS) (Acyrthosiphon pisum symbiotic bacterium), this protein is Cold shock-like protein CspE (cspE).